The following is a 205-amino-acid chain: Cryptic plasmid protein C (205 aa).

A disordered region spans residues Thr142–Phe205. Polar residues predominate over residues Gln155–Ile174. Basic residues predominate over residues Gln189–Phe205.

The chain is Cryptic plasmid protein C (cppC) from Neisseria gonorrhoeae.